Here is a 97-residue protein sequence, read N- to C-terminus: Protein RnfH (97 aa).

Belongs to the UPF0125 (RnfH) family.

In Aliivibrio salmonicida (strain LFI1238) (Vibrio salmonicida (strain LFI1238)), this protein is Protein RnfH.